The primary structure comprises 132 residues: Small ribosomal subunit protein uS8c (132 aa).

This sequence belongs to the universal ribosomal protein uS8 family. In terms of assembly, part of the 30S ribosomal subunit.

The protein resides in the plastid. Its subcellular location is the chloroplast. One of the primary rRNA binding proteins, it binds directly to 16S rRNA central domain where it helps coordinate assembly of the platform of the 30S subunit. The protein is Small ribosomal subunit protein uS8c (rps8) of Buxus microphylla (Littleleaf boxwood).